The primary structure comprises 428 residues: Dihydroorotase (428 aa).

Zn(2+)-binding residues include H59 and H61. Residues 61-63 (HLR) and N93 each bind substrate. Residues D151, H178, and H231 each contribute to the Zn(2+) site. Residue N277 coordinates substrate. D304 contacts Zn(2+). The active site involves D304. Substrate contacts are provided by residues H308 and 322–323 (FG).

Belongs to the metallo-dependent hydrolases superfamily. DHOase family. Class I DHOase subfamily. Zn(2+) is required as a cofactor.

The catalysed reaction is (S)-dihydroorotate + H2O = N-carbamoyl-L-aspartate + H(+). The protein operates within pyrimidine metabolism; UMP biosynthesis via de novo pathway; (S)-dihydroorotate from bicarbonate: step 3/3. Functionally, catalyzes the reversible cyclization of carbamoyl aspartate to dihydroorotate. This is Dihydroorotase from Bacillus cereus (strain AH187).